The primary structure comprises 321 residues: Degreening-related gene dee76 protein (321 aa).

Belongs to the Mo25 family.

The sequence is that of Degreening-related gene dee76 protein (DEE76) from Auxenochlorella protothecoides (Green microalga).